Reading from the N-terminus, the 660-residue chain is Putative ATP-dependent RNA helicase Pl10 (660 aa).

The span at 1 to 11 shows a compositional bias: acidic residues; it reads MSHVAEEDELG. Residues 1–117 form a disordered region; sequence MSHVAEEDEL…SRGGRSGFGK (117 aa). Ser-2 bears the N-acetylserine mark. The span at 12–21 shows a compositional bias: low complexity; that stretch reads LDQQLAGLDL. Residues 24–34 show a composition bias toward polar residues; it reads RDSQSGGSTAS. Basic and acidic residues predominate over residues 44 to 66; sequence RNREAAKAFYDKDGSRWSKDKDA. An N6-acetyllysine modification is found at Lys-55. Residues Ser-80, Ser-84, and Ser-89 each carry the phosphoserine modification. The span at 93–103 shows a compositional bias: basic and acidic residues; it reads GRFDERGRSDY. Omega-N-methylarginine is present on Arg-100. The residue at position 101 (Ser-101) is a Phosphoserine. Phosphotyrosine is present on Tyr-103. Arg-109 is modified (omega-N-methylarginine). Lys-117 carries the post-translational modification N6-acetyllysine. The Q motif motif lies at 179–207; that stretch reads ESFSDVEMGEIIMGNIELTRYTRPTPVQK. Ser-182 is modified (phosphoserine). An ATP-binding site is contributed by 199–206; sequence YTRPTPVQ. One can recognise a Helicase ATP-binding domain in the interval 210–402; sequence IPIIKEKRDL…RDFLDEYIFL (193 aa). Residue Lys-214 forms a Glycyl lysine isopeptide (Lys-Gly) (interchain with G-Cter in SUMO2) linkage. Residue 223 to 230 coordinates ATP; sequence AQTGSGKT. A DEAD box motif is present at residues 346–349; it reads DEAD. Residues 413 to 574 form the Helicase C-terminal domain; it reads NITQKVVWVE…EVPSWLENMA (162 aa). At Ser-455 the chain carries Phosphoserine. Arg-590 bears the Omega-N-methylarginine mark. Ser-592, Ser-603, and Ser-610 each carry phosphoserine. The interval 598–632 is disordered; it reads RDYRQSSGASSSSFSSGRASNSRSGGGSHGSSRGF. A compositionally biased stretch (low complexity) spans 602–620; that stretch reads QSSGASSSSFSSGRASNSR. An omega-N-methylarginine mark is found at Arg-615 and Arg-630. A compositionally biased stretch (gly residues) spans 621–632; it reads SGGGSHGSSRGF.

The protein belongs to the DEAD box helicase family. DDX3/DED1 subfamily. Testis.

The enzyme catalyses ATP + H2O = ADP + phosphate + H(+). Putative ATP-dependent RNA helicase. Possible role in a key step of the spermatogenic process. In Mus musculus (Mouse), this protein is Putative ATP-dependent RNA helicase Pl10 (D1Pas1).